The chain runs to 500 residues: Histidinol dehydrogenase homolog 1 (500 aa).

Residues Met1–Ala25 form a disordered region. Positions Pro12–Thr21 are enriched in basic residues. Positions 313 and 316 each coordinate Zn(2+). Active-site proton acceptor residues include Glu381 and His382. Zn(2+) contacts are provided by Asp415 and His475.

It belongs to the histidinol dehydrogenase family. It depends on Zn(2+) as a cofactor.

This Mesorhizobium japonicum (strain LMG 29417 / CECT 9101 / MAFF 303099) (Mesorhizobium loti (strain MAFF 303099)) protein is Histidinol dehydrogenase homolog 1.